The primary structure comprises 212 residues: Octanoyltransferase (212 aa).

The region spanning 31-209 (AETQDEIWLV…HFADLLGYNI (179 aa)) is the BPL/LPL catalytic domain. Substrate-binding positions include 70–77 (RGGQITYH), 138–140 (SLG), and 151–153 (GLA). Cys-169 (acyl-thioester intermediate) is an active-site residue.

Belongs to the LipB family.

It localises to the cytoplasm. It catalyses the reaction octanoyl-[ACP] + L-lysyl-[protein] = N(6)-octanoyl-L-lysyl-[protein] + holo-[ACP] + H(+). It participates in protein modification; protein lipoylation via endogenous pathway; protein N(6)-(lipoyl)lysine from octanoyl-[acyl-carrier-protein]: step 1/2. Its function is as follows. Catalyzes the transfer of endogenously produced octanoic acid from octanoyl-acyl-carrier-protein onto the lipoyl domains of lipoate-dependent enzymes. Lipoyl-ACP can also act as a substrate although octanoyl-ACP is likely to be the physiological substrate. The protein is Octanoyltransferase of Haemophilus influenzae (strain PittEE).